Consider the following 216-residue polypeptide: Sugar transporter SWEET1 (216 aa).

7 consecutive transmembrane segments (helical) span residues 3–23 (WMWLLSGACIVFTLGMFSSGL), 36–56 (ENIQYLPFLTTDLNNLGWFYY), 65–85 (LMIVNVIGASLQSLYMGAYLL), 96–116 (QVLVSLGVLLLGYCYFTLWIL), 125–145 (LGLFCSVFTISMYLSPLADLA), 157–177 (SFPLTVATFLTSSSWVLYGLV), and 181–201 (LYITVPNFPGIVTSLVRFWLF). Positions 6–90 (LLSGACIVFT…GAYLLYSPER (85 aa)) constitute a MtN3/slv 1 domain. The MtN3/slv 2 domain maps to 124–206 (QLGLFCSVFT…RFWLFSQFPP (83 aa)).

Belongs to the SWEET sugar transporter family.

The protein resides in the golgi apparatus membrane. Its subcellular location is the cell membrane. In terms of biological role, mediates sugar transport across membranes. In Xenopus laevis (African clawed frog), this protein is Sugar transporter SWEET1 (slc50a1).